Reading from the N-terminus, the 1099-residue chain is DNA-directed RNA polymerase subunit beta (1099 aa).

The protein belongs to the RNA polymerase beta chain family. In terms of assembly, in plastids the minimal PEP RNA polymerase catalytic core is composed of four subunits: alpha, beta, beta', and beta''. When a (nuclear-encoded) sigma factor is associated with the core the holoenzyme is formed, which can initiate transcription.

The protein resides in the plastid. It is found in the chloroplast. The catalysed reaction is RNA(n) + a ribonucleoside 5'-triphosphate = RNA(n+1) + diphosphate. DNA-dependent RNA polymerase catalyzes the transcription of DNA into RNA using the four ribonucleoside triphosphates as substrates. The polypeptide is DNA-directed RNA polymerase subunit beta (Bigelowiella natans (Pedinomonas minutissima)).